Reading from the N-terminus, the 206-residue chain is MGGKWSKSSVIGWPTVRERMRRAEPAADGVGAASQDLEKHGAITSSNTAATNADCAWLEAQEEEEVGFPVTPQVPLRPMTYKAAVDLSHFLKEKGGLEGLIHSQRRQDILDLWIYHTQGYFPDWQNYTPGPGIRYPLTFGWCYKLVPVEPEKLEEANKGENTSLLHPVSLHGMDDPEREVLEWRFDSRLAFHHVARELHPEYFKNC.

Gly2 carries the N-myristoyl glycine; by host lipid modification. Phosphoserine; by host is present on Ser6. Positions 62-65 are acidic; interacts with host PACS1 and PACS2; stabilizes the interaction of NEF/MHC-I with host AP1M1; necessary for MHC-I internalization; sequence EEEE. The SH3-binding; interaction with Src family tyrosine kinases stretch occupies residues 69-78; it reads PVTPQVPLRP. The short motif at 72 to 75 is the PxxP; stabilizes the interaction of NEF/MHC-I with host AP1M1; necessary for MHC-I internalization element; that stretch reads PQVP. Positions 108 to 124 are mediates dimerization, Nef-PTE1 interaction; that stretch reads DILDLWIYHTQGYFPDW. The segment at 148-180 is binding to ATP6V1H; the sequence is VEPEKLEEANKGENTSLLHPVSLHGMDDPEREV. The Dileucine internalization motif; necessary for CD4 internalization signature appears at 164 to 165; it reads LL. A Diacidic; necessary for CD4 internalization motif is present at residues 174-175; that stretch reads DD.

The protein belongs to the lentivirus primate group Nef protein family. Monomer; cytosolic form. Homodimer; membrane bound form. Interacts with Nef associated p21-activated kinase (PAK2); this interaction activates PAK2. Associates with the Nef-MHC-I-AP1 complex; this complex is required for MHC-I internalization. Interacts (via C-terminus) with host PI3-kinase. Interacts with host PACS1; this interaction seems to be weak. Interacts with host PACS2. Interacts with host LCK and MAPK3; these interactions inhibit the kinase activity of the latter. Interacts with host ATP6V1H; this interaction may play a role in CD4 endocytosis. Associates with the CD4-Nef-AP2 complex; this complex is required for CD4 internalization. Interacts with host AP2 subunit alpha and AP2 subunit sigma2. Interacts with TCR-zeta chain; this interaction up-regulates the Fas ligand (FasL) surface expression. Interacts with host HCK, LYN, and SRC; these interactions activate the Src family kinases. Interacts with MAP3K5; this interaction inhibits the Fas and TNFR-mediated death signals. Interacts with beta-COP and PTE1. Interacts with human RACK1; this increases Nef phosphorylation by PKC. Interacts with TP53; this interaction decreases the half-life of TP53, protecting the infected cell against p53-mediated apoptosis. Post-translationally, the virion-associated Nef proteins are cleaved by the viral protease to release the soluble C-terminal core protein. Nef is probably cleaved concomitantly with viral structural proteins on maturation of virus particles. Myristoylated. In terms of processing, phosphorylated on serine residues, probably by host PKCdelta and theta.

It localises to the host cell membrane. Its subcellular location is the virion. It is found in the secreted. The protein resides in the host Golgi apparatus membrane. In terms of biological role, factor of infectivity and pathogenicity, required for optimal virus replication. Alters numerous pathways of T-lymphocyte function and down-regulates immunity surface molecules in order to evade host defense and increase viral infectivity. Alters the functionality of other immunity cells, like dendritic cells, monocytes/macrophages and NK cells. Functionally, in infected CD4(+) T-lymphocytes, down-regulates the surface MHC-I, mature MHC-II, CD4, CD28, CCR5 and CXCR4 molecules. Mediates internalization and degradation of host CD4 through the interaction of with the cytoplasmic tail of CD4, the recruitment of AP-2 (clathrin adapter protein complex 2), internalization through clathrin coated pits, and subsequent transport to endosomes and lysosomes for degradation. Diverts host MHC-I molecules to the trans-Golgi network-associated endosomal compartments by an endocytic pathway to finally target them for degradation. MHC-I down-regulation may involve AP-1 (clathrin adapter protein complex 1) or possibly Src family kinase-ZAP70/Syk-PI3K cascade recruited by PACS2. In consequence infected cells are masked for immune recognition by cytotoxic T-lymphocytes. Decreasing the number of immune receptors also prevents reinfection by more HIV particles (superinfection). Down-regulates host SERINC3 and SERINC5 thereby excluding these proteins from the viral particles. Virion infectivity is drastically higher when SERINC3 or SERINC5 are excluded from the viral envelope, because these host antiviral proteins impair the membrane fusion event necessary for subsequent virion penetration. Bypasses host T-cell signaling by inducing a transcriptional program nearly identical to that of anti-CD3 cell activation. Interaction with TCR-zeta chain up-regulates the Fas ligand (FasL). Increasing surface FasL molecules and decreasing surface MHC-I molecules on infected CD4(+) cells send attacking cytotoxic CD8+ T-lymphocytes into apoptosis. Its function is as follows. Plays a role in optimizing the host cell environment for viral replication without causing cell death by apoptosis. Protects the infected cells from apoptosis in order to keep them alive until the next virus generation is ready to strike. Inhibits the Fas and TNFR-mediated death signals by blocking MAP3K5/ASK1. Decreases the half-life of TP53, protecting the infected cell against p53-mediated apoptosis. Inhibits the apoptotic signals regulated by the Bcl-2 family proteins through the formation of a Nef/PI3-kinase/PAK2 complex that leads to activation of PAK2 and induces phosphorylation of host BAD. In terms of biological role, extracellular Nef protein targets CD4(+) T-lymphocytes for apoptosis by interacting with CXCR4 surface receptors. This Human immunodeficiency virus type 1 group M subtype B (isolate LW123) (HIV-1) protein is Protein Nef.